Consider the following 765-residue polypeptide: Single-minded homolog 1 (765 aa).

The bHLH domain maps to 1–53 (MKEKSKNAARTRREKENSEFYELAKLLPLPSAITSQLDKASIIRLTTSYLKMR). 2 PAS domains span residues 77 to 147 (GREL…QPYH) and 218 to 288 (PPSA…LVKG). The 44-residue stretch at 292–335 (TKYYRFLAKQGGWVWVQSYATIVHNSRSSRPHCIVSVNYVLTDT) folds into the PAC domain. The region spanning 336-765 (EYKGLQLSLD…GTSVIITNGS (430 aa)) is the Single-minded C-terminal domain. Low complexity-rich tracts occupy residues 352–365 (PTFS…PTIS) and 373–385 (SRLS…SRTS). Disordered regions lie at residues 352 to 428 (PTFS…PGSQ) and 527 to 560 (WDED…PHEP). The short motif at 368–387 (RKGAKSRLSSSKSKSRTSPY) is the Nuclear localization signal element. The span at 394–404 (HTERSESDHDS) shows a compositional bias: basic and acidic residues.

Efficient DNA binding requires dimerization with another bHLH protein. Heterodimer; forms a heterodimer with ARNT, ARNT2. In terms of tissue distribution, detected in lung, skeletal muscle and kidney. During fetal development it is found in the CNS, developing kidney, mesodermal and endodermal tissues, including developing somites, mesonephric duct, and foregut.

It is found in the nucleus. Transcriptional factor that may have pleiotropic effects during embryogenesis and in the adult. The protein is Single-minded homolog 1 (Sim1) of Mus musculus (Mouse).